The sequence spans 339 residues: Meiotic recombination protein rec7 (339 aa).

In terms of biological role, may be involved primarily in the early steps of meiotic recombination. The sequence is that of Meiotic recombination protein rec7 (rec7) from Schizosaccharomyces pombe (strain 972 / ATCC 24843) (Fission yeast).